The following is a 191-amino-acid chain: Thiol:disulfide interchange protein TxlA (191 aa).

Residues 14–30 (ILVIAAALVLTILVVLG) traverse the membrane as a helical segment. Residues 27-148 (VVLGSRQPSA…LAANLDALVE (122 aa)) form the Thioredoxin domain. A disulfide bridge links Cys69 with Cys72. Polar residues predominate over residues 165-185 (SADLQPSRSSQTDPRSHSGQV). The interval 165 to 191 (SADLQPSRSSQTDPRSHSGQVQDGVLD) is disordered.

Belongs to the thioredoxin family.

It is found in the cell membrane. Functionally, required for disulfide bond formation in some proteins. Acts by transferring its disulfide bond to other proteins and is reduced in the process. In Synechococcus elongatus (strain ATCC 33912 / PCC 7942 / FACHB-805) (Anacystis nidulans R2), this protein is Thiol:disulfide interchange protein TxlA (txlA).